The primary structure comprises 712 residues: MVVKILVWSICLIALCHAWMPDSSSKLINHFKSVESKSFTGNATFPDHFIVLNQDETSILVGGRNRVYNLSIFDLSERKGGRIDWPSSDAHGQLCILKGKTDDDCQNYIRILYSSEPGKLVICGTNSYKPLCRTYAFKEGKYLVEKEVEGIGLCPYNPEHNSTSVSYNGQLFSATVADFSGGDPLIYREPQRTELSDLKQLNAPNFVNSVAYGDYIFFFYRETAVEYMNCGKVIYSRVARVCKDDKGGPHQSRDRWTSFLKARLNCSIPGEYPFYFDEIQSTSDIVEGRYNSDDSKKIIYGILTTPVNAIGGSAICAYQMADILRVFEGSFKHQETINSNWLPVPQNLVPEPRPGQCVRDSRILPDKNVNFIKTHSLMEDVPALFGKPVLVRVSLQYRFTAITVDPQVKTINNQYLDVLYIGTDDGKVLKAVNIPKRHAKALLYRKYRTSVHPHGAPVKQLKIAPGYGKVVVVGKDEIRLANLNHCASKTRCKDCVELQDPHCAWDAKQNLCVSIDTVTSYRFLIQDVVRGDDNKCWSPQTDKKTVIKNKPSEVENEITNSIDEKDLDSSDPLIKTGLDDDSDCDPVSENSIGGCAVRQQLVIYTAGTLHIVVVVVSIVGLFSWLYSGLSVFAKFHSDSQYPEAPFIEQHNHLERLSANQTGYLTPRANKAVNLVVKVSSSTPRPKKDNLDVSKDLNIASDGTLQKIKKTYI.

Positions 1-20 are cleaved as a signal peptide; the sequence is MVVKILVWSICLIALCHAWM. In terms of domain architecture, Sema spans 21–483; sequence PDSSSKLINH…GKDEIRLANL (463 aa). Over 21-601 the chain is Extracellular; that stretch reads PDSSSKLINH…IGGCAVRQQL (581 aa). Asn42 and Asn69 each carry an N-linked (GlcNAc...) asparagine glycan. Cystine bridges form between Cys95/Cys105 and Cys123/Cys132. 2 N-linked (GlcNAc...) asparagine glycosylation sites follow: Asn161 and Asn265. Cystine bridges form between Cys242–Cys357, Cys266–Cys316, Cys486–Cys503, and Cys495–Cys512. The helical transmembrane segment at 602–622 threads the bilayer; it reads VIYTAGTLHIVVVVVSIVGLF. Over 623 to 712 the chain is Cytoplasmic; that stretch reads SWLYSGLSVF…TLQKIKKTYI (90 aa).

It belongs to the semaphorin family.

Its subcellular location is the membrane. Functionally, plays a role in growth cones guidance. This Tribolium confusum (Confused flour beetle) protein is Semaphorin-1A (SEMA-1A).